Here is a 301-residue protein sequence, read N- to C-terminus: MHIAIMSRNKNLYSTRRLKEAAIARGHDVKVVDHISCYMNINMTSPSIHMKGVELPKFDAVIPRIGASVTFYGTAVLRQFEMMGVHPLNESVAITRSRDKLRSLQLLSRKSIGLPVTGFANKPSDVPDLLDMVGGAPCVIKLLEGTQGIGVVLAETRKAAESVIEAFMGLKANIMVQEYIKEAGGADIRCFVIGDKVIAAMKRQALPGEFRSNLHRGGSATIVKLTPEERSTALRAAKTMGLNVAGVDILRSKHGPLVMEVNSSPGLEGIEKATGIDVADKIIQFIEKNVKATSTKTKGVG.

Residues 104–287 (LQLLSRKSIG…VADKIIQFIE (184 aa)) form the ATP-grasp domain. Residues Lys-141, 178-179 (EY), Asp-187, and 211-213 (RSN) each bind ATP. Positions 248, 260, and 262 each coordinate Mg(2+). Asp-248, Glu-260, and Asn-262 together coordinate Mn(2+).

Belongs to the RimK family. It depends on Mg(2+) as a cofactor. Mn(2+) serves as cofactor.

This is Probable alpha-L-glutamate ligase 2 from Shewanella denitrificans (strain OS217 / ATCC BAA-1090 / DSM 15013).